Here is a 318-residue protein sequence, read N- to C-terminus: GPN-loop GTPase 2 (318 aa).

Residue G29–T34 coordinates GTP. The short motif at G85 to N87 is the Gly-Pro-Asn (GPN)-loop; involved in dimer interface element. Residue S187–D190 coordinates GTP.

Belongs to the GPN-loop GTPase family. In terms of assembly, heterodimers with gpn1 or gpn3. Binds to RNA polymerase II (RNAPII).

Its function is as follows. Small GTPase required for proper localization of RNA polymerase II and III (RNAPII and RNAPIII). May act at an RNAP assembly step prior to nuclear import. The polypeptide is GPN-loop GTPase 2 (Xenopus laevis (African clawed frog)).